A 175-amino-acid polypeptide reads, in one-letter code: Nucleoside-triphosphatase THEP1 (175 aa).

ATP-binding positions include 8-15 (GSPGVGKS) and 99-106 (LVVIDEIG).

Belongs to the THEP1 NTPase family.

It carries out the reaction a ribonucleoside 5'-triphosphate + H2O = a ribonucleoside 5'-diphosphate + phosphate + H(+). Its function is as follows. Has nucleotide phosphatase activity towards ATP, GTP, CTP, TTP and UTP. May hydrolyze nucleoside diphosphates with lower efficiency. This Methanosarcina acetivorans (strain ATCC 35395 / DSM 2834 / JCM 12185 / C2A) protein is Nucleoside-triphosphatase THEP1.